The following is a 61-amino-acid chain: Large ribosomal subunit protein eL37 (61 aa).

The Zn(2+) site is built by Cys18, Cys21, Cys33, and Cys36. The segment at 18–36 (CRRCGRNAYNPTKKYCASC) adopts a C4-type zinc-finger fold.

The protein belongs to the eukaryotic ribosomal protein eL37 family. Zn(2+) serves as cofactor.

Functionally, binds to the 23S rRNA. This is Large ribosomal subunit protein eL37 from Methanosphaera stadtmanae (strain ATCC 43021 / DSM 3091 / JCM 11832 / MCB-3).